Consider the following 312-residue polypeptide: Tetraacyldisaccharide 4'-kinase (312 aa).

An ATP-binding site is contributed by 60-67 (IAGGSGKT).

The protein belongs to the LpxK family.

It carries out the reaction a lipid A disaccharide + ATP = a lipid IVA + ADP + H(+). It participates in glycolipid biosynthesis; lipid IV(A) biosynthesis; lipid IV(A) from (3R)-3-hydroxytetradecanoyl-[acyl-carrier-protein] and UDP-N-acetyl-alpha-D-glucosamine: step 6/6. In terms of biological role, transfers the gamma-phosphate of ATP to the 4'-position of a tetraacyldisaccharide 1-phosphate intermediate (termed DS-1-P) to form tetraacyldisaccharide 1,4'-bis-phosphate (lipid IVA). This is Tetraacyldisaccharide 4'-kinase from Helicobacter pylori (strain J99 / ATCC 700824) (Campylobacter pylori J99).